Here is a 520-residue protein sequence, read N- to C-terminus: Probable E3 ubiquitin-protein ligase rbrA (520 aa).

Residues 1 to 42 (MTDDEMYEDYDVDDDSAEESGNESLDDTEYDDAATQEFDFDE) show a composition bias toward acidic residues. The segment at 1–51 (MTDDEMYEDYDVDDDSAEESGNESLDDTEYDDAATQEFDFDENQPQRSLGK) is disordered. Residues 135–354 (GNVSCLICLE…GGYYNCNKYD (220 aa)) are TRIAD supradomain. Residues Cys-139, Cys-142, Cys-156, His-158, Cys-161, Cys-164, Cys-184, Cys-189, Cys-228, Cys-233, Cys-250, Cys-252, Cys-257, Cys-260, His-268, Cys-273, Cys-300, and Cys-303 each coordinate Zn(2+). The RING-type 1 zinc-finger motif lies at 139–189 (CLICLEDYPPTQTFALICNHRYCLPCYKNYLEIKVSEGPECIYTPCPAPKC). Residues 208–273 (ERFNNFILKS…EIGDHMPCPC (66 aa)) form an IBR-type zinc finger. An RING-type 2; atypical zinc finger spans residues 300-333 (CPECRSPIEKNGGCMHMTCRKNAGGCGFEFCWLC). The active site involves Cys-313. Residues Cys-318, Cys-325, Cys-330, Cys-333, His-340, and Cys-350 each contribute to the Zn(2+) site.

The protein belongs to the RBR family.

The enzyme catalyses [E2 ubiquitin-conjugating enzyme]-S-ubiquitinyl-L-cysteine + [acceptor protein]-L-lysine = [E2 ubiquitin-conjugating enzyme]-L-cysteine + [acceptor protein]-N(6)-ubiquitinyl-L-lysine.. It functions in the pathway protein modification; protein ubiquitination. Might act as an E3 ubiquitin-protein ligase. Appears to be required for normal cell-type proportioning and cell sorting during multicellular development. In addition to being necessary for a normal percentage of prestalk cells and the organization of the slug, rbrA is also necessary for spore cell viability. This is Probable E3 ubiquitin-protein ligase rbrA (rbrA) from Dictyostelium discoideum (Social amoeba).